Reading from the N-terminus, the 250-residue chain is Cell division protein ZapD (250 aa).

The protein belongs to the ZapD family. As to quaternary structure, interacts with FtsZ.

The protein localises to the cytoplasm. Its function is as follows. Cell division factor that enhances FtsZ-ring assembly. Directly interacts with FtsZ and promotes bundling of FtsZ protofilaments, with a reduction in FtsZ GTPase activity. The sequence is that of Cell division protein ZapD from Serratia proteamaculans (strain 568).